The following is a 90-amino-acid chain: Early nodulin-36A (90 aa).

This is Early nodulin-36A from Glycine max (Soybean).